The primary structure comprises 282 residues: Aminoglycoside 6-adenylyltransferase (282 aa).

It catalyses the reaction streptomycin + ATP = 6-O-adenylylstreptomycin + diphosphate. In terms of biological role, required for streptomycin resistance. Adenylates streptomycin on the O-6 residue. The chain is Aminoglycoside 6-adenylyltransferase from Staphylococcus aureus.